Reading from the N-terminus, the 245-residue chain is Uridylate kinase (245 aa).

Position 12–15 (12–15 (KLSG)) interacts with ATP. Residues 20-25 (GERGVG) are involved in allosteric activation by GTP. Gly-54 contributes to the UMP binding site. ATP is bound by residues Gly-55 and Arg-59. UMP contacts are provided by residues Asp-74 and 135-142 (IGSPYFST). Residues Asn-163, Tyr-169, and Asp-172 each contribute to the ATP site.

Belongs to the UMP kinase family. Homohexamer.

The protein resides in the cytoplasm. The enzyme catalyses UMP + ATP = UDP + ADP. It participates in pyrimidine metabolism; CTP biosynthesis via de novo pathway; UDP from UMP (UMPK route): step 1/1. With respect to regulation, allosterically activated by GTP. Inhibited by UTP. Functionally, catalyzes the reversible phosphorylation of UMP to UDP. This Streptococcus pneumoniae serotype 2 (strain D39 / NCTC 7466) protein is Uridylate kinase.